A 201-amino-acid chain; its full sequence is Large ribosomal subunit protein uL4 (201 aa).

A disordered region spans residues 45–67; it reads AQKTRAEVTGSGKKPWRQKGTGR.

The protein belongs to the universal ribosomal protein uL4 family. As to quaternary structure, part of the 50S ribosomal subunit.

Its function is as follows. One of the primary rRNA binding proteins, this protein initially binds near the 5'-end of the 23S rRNA. It is important during the early stages of 50S assembly. It makes multiple contacts with different domains of the 23S rRNA in the assembled 50S subunit and ribosome. In terms of biological role, forms part of the polypeptide exit tunnel. This Yersinia enterocolitica serotype O:8 / biotype 1B (strain NCTC 13174 / 8081) protein is Large ribosomal subunit protein uL4.